Consider the following 95-residue polypeptide: Aspartyl/glutamyl-tRNA(Asn/Gln) amidotransferase subunit C (95 aa).

It belongs to the GatC family. As to quaternary structure, heterotrimer of A, B and C subunits.

The enzyme catalyses L-glutamyl-tRNA(Gln) + L-glutamine + ATP + H2O = L-glutaminyl-tRNA(Gln) + L-glutamate + ADP + phosphate + H(+). It carries out the reaction L-aspartyl-tRNA(Asn) + L-glutamine + ATP + H2O = L-asparaginyl-tRNA(Asn) + L-glutamate + ADP + phosphate + 2 H(+). Allows the formation of correctly charged Asn-tRNA(Asn) or Gln-tRNA(Gln) through the transamidation of misacylated Asp-tRNA(Asn) or Glu-tRNA(Gln) in organisms which lack either or both of asparaginyl-tRNA or glutaminyl-tRNA synthetases. The reaction takes place in the presence of glutamine and ATP through an activated phospho-Asp-tRNA(Asn) or phospho-Glu-tRNA(Gln). In Chlorobium luteolum (strain DSM 273 / BCRC 81028 / 2530) (Pelodictyon luteolum), this protein is Aspartyl/glutamyl-tRNA(Asn/Gln) amidotransferase subunit C.